Here is a 339-residue protein sequence, read N- to C-terminus: DNA-directed RNA polymerase subunit alpha (339 aa).

Residues 1–235 (MTIQKNWQEL…DQLNVFVNFE (235 aa)) are alpha N-terminal domain (alpha-NTD). The alpha C-terminal domain (alpha-CTD) stretch occupies residues 251-339 (FNPAFLKKVD…ELAKRFEDHY (89 aa)).

It belongs to the RNA polymerase alpha chain family. Homodimer. The RNAP catalytic core consists of 2 alpha, 1 beta, 1 beta' and 1 omega subunit. When a sigma factor is associated with the core the holoenzyme is formed, which can initiate transcription.

The catalysed reaction is RNA(n) + a ribonucleoside 5'-triphosphate = RNA(n+1) + diphosphate. Its function is as follows. DNA-dependent RNA polymerase catalyzes the transcription of DNA into RNA using the four ribonucleoside triphosphates as substrates. In Rhodopseudomonas palustris (strain BisB5), this protein is DNA-directed RNA polymerase subunit alpha.